The following is a 160-amino-acid chain: ATP synthase subunit delta, mitochondrial (160 aa).

The transit peptide at 1–22 directs the protein to the mitochondrion; the sequence is MFRQSLRSIARTRTGTIGVRTY.

In terms of assembly, F-type ATP synthases have 2 components, the catalytic core F(1) and the membrane-embedded component F(0), linked together by a central stalk and a peripheral stalk. The central stalk, also called rotor shaft, is often seen as part of F(1). The peripheral stalk is seen as part of F(0). F(0) contains the membrane channel next to the rotor. F-type ATP synthases form dimers but each monomer functions independently in ATP generation. The dimer consists of 18 different polypeptides: ATP1 (subunit alpha, part of F(1), 3 molecules per monomer), ATP2 (subunit beta, part of F(1), 3 molecules per monomer), ATP3 (subunit gamma, part of the central stalk), ATP4 (subunit b, part of the peripheral stalk), ATP5/OSCP (subunit 5/OSCP, part of the peripheral stalk), ATP6 (subunit a, part of the peripheral stalk), ATP7 (subunit d, part of the peripheral stalk), ATP8 (subunit 8, part of the peripheral stalk), OLI1 (subunit c, part of the rotor, 10 molecules per monomer), ATP14 (subunit h, part of the peripheral stalk), ATP15 (subunit epsilon, part of the central stalk), ATP16 (subunit delta, part of the central stalk), ATP17 (subunit f, part of the peripheral stalk), ATP18 (subunit i/j, part of the peripheral stalk). Dimer-specific subunits are ATP19 (subunit k, at interface between monomers), ATP20 (subunit g, at interface between monomers), TIM11 (subunit e, at interface between monomers). Also contains subunit L.

The protein localises to the mitochondrion inner membrane. In terms of biological role, mitochondrial membrane ATP synthase (F(1)F(0) ATP synthase or Complex V) produces ATP from ADP in the presence of a proton gradient across the membrane which is generated by electron transport complexes of the respiratory chain. F-type ATP synthases consist of two structural domains, F(1) - containing the extramembraneous catalytic core, and F(0) - containing the membrane proton channel, linked together by a central stalk and a peripheral stalk. During catalysis, ATP synthesis in the catalytic domain of F(1) is coupled via a rotary mechanism of the central stalk subunits to proton translocation. Part of the complex F(1) domain and the central stalk which is part of the complex rotary element. Rotation of the central stalk against the surrounding alpha/ATP1(3)beta/ATP2(3) subunits leads to hydrolysis of ATP in three separate catalytic sites on the beta/ATP2 subunits. In Pichia angusta (Yeast), this protein is ATP synthase subunit delta, mitochondrial.